The chain runs to 160 residues: 2-C-methyl-D-erythritol 2,4-cyclodiphosphate synthase (160 aa).

A divalent metal cation is bound by residues Asp10 and His12. 4-CDP-2-C-methyl-D-erythritol 2-phosphate-binding positions include 10-12 (DVH) and 36-37 (HS). His44 lines the a divalent metal cation pocket. 4-CDP-2-C-methyl-D-erythritol 2-phosphate-binding positions include 58 to 60 (DIG), 63 to 67 (FPDTD), and Arg144.

This sequence belongs to the IspF family. Homotrimer. It depends on a divalent metal cation as a cofactor.

The catalysed reaction is 4-CDP-2-C-methyl-D-erythritol 2-phosphate = 2-C-methyl-D-erythritol 2,4-cyclic diphosphate + CMP. Its pathway is isoprenoid biosynthesis; isopentenyl diphosphate biosynthesis via DXP pathway; isopentenyl diphosphate from 1-deoxy-D-xylulose 5-phosphate: step 4/6. Functionally, involved in the biosynthesis of isopentenyl diphosphate (IPP) and dimethylallyl diphosphate (DMAPP), two major building blocks of isoprenoid compounds. Catalyzes the conversion of 4-diphosphocytidyl-2-C-methyl-D-erythritol 2-phosphate (CDP-ME2P) to 2-C-methyl-D-erythritol 2,4-cyclodiphosphate (ME-CPP) with a corresponding release of cytidine 5-monophosphate (CMP). This is 2-C-methyl-D-erythritol 2,4-cyclodiphosphate synthase from Dechloromonas aromatica (strain RCB).